We begin with the raw amino-acid sequence, 158 residues long: Cyclic pyranopterin monophosphate synthase (158 aa).

Substrate-binding positions include 76 to 78 and 114 to 115; these read LCH and ME. D129 is an active-site residue.

The protein belongs to the MoaC family. Homohexamer; trimer of dimers.

The catalysed reaction is (8S)-3',8-cyclo-7,8-dihydroguanosine 5'-triphosphate = cyclic pyranopterin phosphate + diphosphate. The protein operates within cofactor biosynthesis; molybdopterin biosynthesis. Functionally, catalyzes the conversion of (8S)-3',8-cyclo-7,8-dihydroguanosine 5'-triphosphate to cyclic pyranopterin monophosphate (cPMP). The sequence is that of Cyclic pyranopterin monophosphate synthase from Shewanella loihica (strain ATCC BAA-1088 / PV-4).